The sequence spans 407 residues: Nicotinate phosphoribosyltransferase (407 aa).

Histidine 224 bears the Phosphohistidine; by autocatalysis mark.

The protein belongs to the NAPRTase family. Post-translationally, transiently phosphorylated on a His residue during the reaction cycle. Phosphorylation strongly increases the affinity for substrates and increases the rate of nicotinate D-ribonucleotide production. Dephosphorylation regenerates the low-affinity form of the enzyme, leading to product release.

The enzyme catalyses nicotinate + 5-phospho-alpha-D-ribose 1-diphosphate + ATP + H2O = nicotinate beta-D-ribonucleotide + ADP + phosphate + diphosphate. Its pathway is cofactor biosynthesis; NAD(+) biosynthesis; nicotinate D-ribonucleotide from nicotinate: step 1/1. Its function is as follows. Catalyzes the synthesis of beta-nicotinate D-ribonucleotide from nicotinate and 5-phospho-D-ribose 1-phosphate at the expense of ATP. The chain is Nicotinate phosphoribosyltransferase from Pseudomonas syringae pv. tomato (strain ATCC BAA-871 / DC3000).